The following is a 123-amino-acid chain: Phosphoribosyl-AMP cyclohydrolase (123 aa).

Mg(2+) is bound at residue Asp81. Cys82 contributes to the Zn(2+) binding site. Residues Asp83 and Asp85 each coordinate Mg(2+). 2 residues coordinate Zn(2+): Cys98 and Cys105.

Belongs to the PRA-CH family. As to quaternary structure, homodimer. Mg(2+) serves as cofactor. It depends on Zn(2+) as a cofactor.

The protein resides in the cytoplasm. It catalyses the reaction 1-(5-phospho-beta-D-ribosyl)-5'-AMP + H2O = 1-(5-phospho-beta-D-ribosyl)-5-[(5-phospho-beta-D-ribosylamino)methylideneamino]imidazole-4-carboxamide. Its pathway is amino-acid biosynthesis; L-histidine biosynthesis; L-histidine from 5-phospho-alpha-D-ribose 1-diphosphate: step 3/9. Functionally, catalyzes the hydrolysis of the adenine ring of phosphoribosyl-AMP. The polypeptide is Phosphoribosyl-AMP cyclohydrolase (Nocardioides sp. (strain ATCC BAA-499 / JS614)).